Here is a 443-residue protein sequence, read N- to C-terminus: Packaging protein 1 (443 aa).

The tract at residues 1–75 (MSGAADGTVP…PEAAQPPPSR (75 aa)) is disordered. Basic and acidic residues predominate over residues 13–56 (EDTHQEDSGERECEQRPVHSGREATGESDPALERPDHGERHGPE). Residue 169–176 (GPTGSGKS) coordinates ATP. The DNA-binding stretch occupies residues 433–443 (VSYANKRKWYD).

This sequence belongs to the adenoviridae packaging protein 1 family. Homodimer. Part of a genome packaging complex composed of packaging proteins 1, 2 and 3; this complex specifically binds to the packaging sequence on the left end of viral genomic DNA and performs packaging of the viral genome. Interacts with protein 33K.

Its subcellular location is the virion. The protein resides in the host nucleus. It localises to the host nucleoplasm. The protein localises to the host nucleolus. Its function is as follows. Component of the packaging machinery which encapsidates the viral DNA into preformed capsids and transcriptional activator of the viral major late promoter (MLP). Binds, along with packaging proteins 2 and 3, to the specific packaging sequence on the left end of viral genomic DNA and displays ATPase activity thereby providing the power stroke of the packaging machinery. The activity of packaging protein IVa2 is stimulated by protein 33K which acts as a terminase. May be the protein that pumps DNA into the capsid powered by ATP hydrolysis. Specifically binds to the 5'-CG-3' nucleotides of the repeats making up the packaging sequence. Component of the DEF-A and DEF-B transcription factors that bind downstream elements of the major late promoter (MLP), and stimulate transcription from the MLP after initiation of viral DNA replication. DEF-A is a heterodimer packaging proteins 1 and 2 and DEF-B is a homodimer of packaging protein 1. The protein is Packaging protein 1 of Pantherophis guttatus (Corn snake).